The following is a 351-amino-acid chain: UDP-3-O-acylglucosamine N-acyltransferase (351 aa).

Residue His-257 is the Proton acceptor of the active site.

The protein belongs to the transferase hexapeptide repeat family. LpxD subfamily. Homotrimer.

The enzyme catalyses a UDP-3-O-[(3R)-3-hydroxyacyl]-alpha-D-glucosamine + a (3R)-hydroxyacyl-[ACP] = a UDP-2-N,3-O-bis[(3R)-3-hydroxyacyl]-alpha-D-glucosamine + holo-[ACP] + H(+). It functions in the pathway bacterial outer membrane biogenesis; LPS lipid A biosynthesis. Its function is as follows. Catalyzes the N-acylation of UDP-3-O-acylglucosamine using 3-hydroxyacyl-ACP as the acyl donor. Is involved in the biosynthesis of lipid A, a phosphorylated glycolipid that anchors the lipopolysaccharide to the outer membrane of the cell. The protein is UDP-3-O-acylglucosamine N-acyltransferase of Brucella abortus (strain S19).